The following is a 216-amino-acid chain: MARSKTSHNWLKEHFDDKYVKMAQKDGYRSRASYKLLEIQEKDKLIRPGMTVIDLGAAPGGWSQVTSRLIGGQGRLIASDILEMDSIPDVTFIQGDFTEDAILEQILEAVGNTQVDLVISDMAPNMSGLSAVDMPRAMFLCELALDLAGRVLRPGGDFLIKVFQGEGFDVYHKDIRKLFDKVQMRKPSSSRDRSREQYLLARGFRGIDGAASIERF.

S-adenosyl-L-methionine contacts are provided by G60, W62, D80, D96, and D121. K161 (proton acceptor) is an active-site residue.

The protein belongs to the class I-like SAM-binding methyltransferase superfamily. RNA methyltransferase RlmE family.

Its subcellular location is the cytoplasm. The catalysed reaction is uridine(2552) in 23S rRNA + S-adenosyl-L-methionine = 2'-O-methyluridine(2552) in 23S rRNA + S-adenosyl-L-homocysteine + H(+). Functionally, specifically methylates the uridine in position 2552 of 23S rRNA at the 2'-O position of the ribose in the fully assembled 50S ribosomal subunit. The chain is Ribosomal RNA large subunit methyltransferase E from Pseudomonas syringae pv. syringae (strain B728a).